Reading from the N-terminus, the 283-residue chain is MELLDGRALANELTHAQQTAVETLKEQGVTPKLVVIMVGDDPASAIYTQSKQKRATKIGMASELKRLSAETTEAELLALVKTLNDDRTVDGILVQLPLPKQINEDHVIQAIDAKKDVDGFSPVNIGQLWLNQPGLVACTPNGIMRLLAAHKIDVAGKNVVIVGRSNIVGRPLAALMLNANATVTIAHSRTANLKALTKTADILVAAIGKPHFFGIDAVKEGAVVIDVGINRLEDGSVTGDVDFEALQTHVSAMTPVPRGVGPMTITMLMEQTIEIAKERVKRG.

Residues 163 to 165 (GRS), S188, and I229 contribute to the NADP(+) site.

Belongs to the tetrahydrofolate dehydrogenase/cyclohydrolase family. As to quaternary structure, homodimer.

It catalyses the reaction (6R)-5,10-methylene-5,6,7,8-tetrahydrofolate + NADP(+) = (6R)-5,10-methenyltetrahydrofolate + NADPH. The enzyme catalyses (6R)-5,10-methenyltetrahydrofolate + H2O = (6R)-10-formyltetrahydrofolate + H(+). It functions in the pathway one-carbon metabolism; tetrahydrofolate interconversion. Its function is as follows. Catalyzes the oxidation of 5,10-methylenetetrahydrofolate to 5,10-methenyltetrahydrofolate and then the hydrolysis of 5,10-methenyltetrahydrofolate to 10-formyltetrahydrofolate. This is Bifunctional protein FolD from Latilactobacillus sakei subsp. sakei (strain 23K) (Lactobacillus sakei subsp. sakei).